The following is a 253-amino-acid chain: Probable transcriptional regulatory protein slr0989 (253 aa).

The tract at residues 1-22 (MGGRKWQSIKRQKARVDAQKGK) is disordered.

The protein belongs to the TACO1 family.

Its subcellular location is the cytoplasm. This chain is Probable transcriptional regulatory protein slr0989, found in Synechocystis sp. (strain ATCC 27184 / PCC 6803 / Kazusa).